Here is a 494-residue protein sequence, read N- to C-terminus: ATP synthase subunit beta, plastid (494 aa).

169–176 contributes to the ATP binding site; that stretch reads GGAGVGKT.

It belongs to the ATPase alpha/beta chains family. F-type ATPases have 2 components, CF(1) - the catalytic core - and CF(0) - the membrane proton channel. CF(1) has five subunits: alpha(3), beta(3), gamma(1), delta(1), epsilon(1). CF(0) has four main subunits: a(1), b(1), b'(1) and c(9-12).

Its subcellular location is the plastid membrane. It carries out the reaction ATP + H2O + 4 H(+)(in) = ADP + phosphate + 5 H(+)(out). Its function is as follows. Produces ATP from ADP in the presence of a proton gradient across the membrane. The catalytic sites are hosted primarily by the beta subunits. This chain is ATP synthase subunit beta, plastid (atpB), found in Cuscuta sandwichiana (Kauna'oa).